The primary structure comprises 264 residues: L-aspartate dehydrogenase (264 aa).

The NAD(+) site is built by alanine 120 and asparagine 186. The active site involves histidine 216.

The protein belongs to the L-aspartate dehydrogenase family.

The enzyme catalyses L-aspartate + NADP(+) + H2O = oxaloacetate + NH4(+) + NADPH + H(+). It catalyses the reaction L-aspartate + NAD(+) + H2O = oxaloacetate + NH4(+) + NADH + H(+). It functions in the pathway cofactor biosynthesis; NAD(+) biosynthesis; iminoaspartate from L-aspartate (dehydrogenase route): step 1/1. Its function is as follows. Specifically catalyzes the NAD or NADP-dependent dehydrogenation of L-aspartate to iminoaspartate. The chain is L-aspartate dehydrogenase from Serratia proteamaculans (strain 568).